A 363-amino-acid chain; its full sequence is Protein-arginine kinase (363 aa).

One can recognise a Phosphagen kinase C-terminal domain in the interval 24–255; sequence IVLSSRIRLA…QQLIAQERAA (232 aa). ATP-binding positions include 27–31, His-92, Arg-126, 177–181, and 208–213; these read SSRIR, RASVM, and RGTYGE. The short motif at 338 to 343 is the RDXXRA motif of the pArg binding pocket involved in allosteric regulation element; that stretch reads RDVRRA.

The protein belongs to the ATP:guanido phosphotransferase family.

It catalyses the reaction L-arginyl-[protein] + ATP = N(omega)-phospho-L-arginyl-[protein] + ADP + H(+). Its activity is regulated as follows. Appears to be allosterically activated by the binding of pArg-containing polypeptides to the pArg-binding pocket localized in the C-terminal domain of McsB. Catalyzes the specific phosphorylation of arginine residues in a large number of proteins. Is part of the bacterial stress response system. Protein arginine phosphorylation has a physiologically important role and is involved in the regulation of many critical cellular processes, such as protein homeostasis, motility, competence, and stringent and stress responses, by regulating gene expression and protein activity. The sequence is that of Protein-arginine kinase from Geobacillus thermodenitrificans (strain NG80-2).